Here is a 339-residue protein sequence, read N- to C-terminus: Uricase (339 aa).

Active-site charge relay system residues include lysine 33 and threonine 78. Residues threonine 78, aspartate 79, phenylalanine 201, arginine 218, valine 266, glutamine 267, and asparagine 293 each coordinate urate. Histidine 295 acts as the Charge relay system in catalysis. The Microbody targeting signal motif lies at 337–339 (SHL).

This sequence belongs to the uricase family.

It localises to the peroxisome. The enzyme catalyses urate + O2 + H2O = 5-hydroxyisourate + H2O2. Its pathway is purine metabolism; urate degradation; (S)-allantoin from urate: step 1/3. In terms of biological role, catalyzes the oxidation of uric acid to 5-hydroxyisourate, which is further processed to form (S)-allantoin. In Drosophila subobscura (Fruit fly), this protein is Uricase (Uro).